Reading from the N-terminus, the 166-residue chain is Large ribosomal subunit protein uL10 (166 aa).

This sequence belongs to the universal ribosomal protein uL10 family. As to quaternary structure, part of the ribosomal stalk of the 50S ribosomal subunit. The N-terminus interacts with L11 and the large rRNA to form the base of the stalk. The C-terminus forms an elongated spine to which L12 dimers bind in a sequential fashion forming a multimeric L10(L12)X complex.

Forms part of the ribosomal stalk, playing a central role in the interaction of the ribosome with GTP-bound translation factors. This chain is Large ribosomal subunit protein uL10, found in Streptococcus sanguinis (strain SK36).